Consider the following 229-residue polypeptide: Large ribosomal subunit protein uL1 (229 aa).

Part of the 50S ribosomal subunit.

Functionally, binds directly to 23S rRNA. The L1 stalk is quite mobile in the ribosome, and is involved in E site tRNA release. Its function is as follows. Protein L1 is also a translational repressor protein, it controls the translation of the L11 operon by binding to its mRNA. The chain is Large ribosomal subunit protein uL1 from Rhodopseudomonas palustris (strain ATCC BAA-98 / CGA009).